A 357-amino-acid chain; its full sequence is Membrane-bound lytic murein transglycosylase C (357 aa).

The N-terminal stretch at 1-16 (MKKLLALFVIAPILIS) is a signal peptide. Cysteine 17 is lipidated: N-palmitoyl cysteine. The S-diacylglycerol cysteine moiety is linked to residue cysteine 17.

Belongs to the transglycosylase Slt family.

The protein localises to the cell outer membrane. The enzyme catalyses Exolytic cleavage of the (1-&gt;4)-beta-glycosidic linkage between N-acetylmuramic acid (MurNAc) and N-acetylglucosamine (GlcNAc) residues in peptidoglycan, from either the reducing or the non-reducing ends of the peptidoglycan chains, with concomitant formation of a 1,6-anhydrobond in the MurNAc residue.. Its function is as follows. Murein-degrading enzyme. May play a role in recycling of muropeptides during cell elongation and/or cell division. The chain is Membrane-bound lytic murein transglycosylase C from Photorhabdus laumondii subsp. laumondii (strain DSM 15139 / CIP 105565 / TT01) (Photorhabdus luminescens subsp. laumondii).